A 204-amino-acid chain; its full sequence is Holliday junction branch migration complex subunit RuvA (204 aa).

The interval 1 to 63 is domain I; the sequence is MIGKLSGKVD…EEHIHLYGFL (63 aa). The segment at 64–142 is domain II; it reads TLEEKIFFNL…KISSGSAIIK (79 aa). The interval 143–149 is flexible linker; the sequence is ESLNIKN. A domain III region spans residues 150–204; the sequence is ITPVASNEVIKALVNLGFSRFEAQNAVQGIITQNPEISIDELIKTALKNRNSNFS.

This sequence belongs to the RuvA family. Homotetramer. Forms an RuvA(8)-RuvB(12)-Holliday junction (HJ) complex. HJ DNA is sandwiched between 2 RuvA tetramers; dsDNA enters through RuvA and exits via RuvB. An RuvB hexamer assembles on each DNA strand where it exits the tetramer. Each RuvB hexamer is contacted by two RuvA subunits (via domain III) on 2 adjacent RuvB subunits; this complex drives branch migration. In the full resolvosome a probable DNA-RuvA(4)-RuvB(12)-RuvC(2) complex forms which resolves the HJ.

It localises to the cytoplasm. The RuvA-RuvB-RuvC complex processes Holliday junction (HJ) DNA during genetic recombination and DNA repair, while the RuvA-RuvB complex plays an important role in the rescue of blocked DNA replication forks via replication fork reversal (RFR). RuvA specifically binds to HJ cruciform DNA, conferring on it an open structure. The RuvB hexamer acts as an ATP-dependent pump, pulling dsDNA into and through the RuvAB complex. HJ branch migration allows RuvC to scan DNA until it finds its consensus sequence, where it cleaves and resolves the cruciform DNA. In Rickettsia rickettsii (strain Iowa), this protein is Holliday junction branch migration complex subunit RuvA.